The chain runs to 227 residues: Lipoprotein-releasing system ATP-binding protein LolD (227 aa).

Residues 6 to 227 (LEMRGITKSY…RLDAGQLSDV (222 aa)) enclose the ABC transporter domain. 43-50 (APSGAGKS) is a binding site for ATP.

Belongs to the ABC transporter superfamily. Lipoprotein translocase (TC 3.A.1.125) family. As to quaternary structure, the complex is composed of two ATP-binding proteins (LolD) and two transmembrane proteins (LolC and LolE).

The protein localises to the cell inner membrane. Functionally, part of the ABC transporter complex LolCDE involved in the translocation of mature outer membrane-directed lipoproteins, from the inner membrane to the periplasmic chaperone, LolA. Responsible for the formation of the LolA-lipoprotein complex in an ATP-dependent manner. The polypeptide is Lipoprotein-releasing system ATP-binding protein LolD (Roseobacter denitrificans (strain ATCC 33942 / OCh 114) (Erythrobacter sp. (strain OCh 114))).